A 350-amino-acid chain; its full sequence is MTTSIIKNQEIKNKLSNPELRLKDIIKTLPKECFQQNRRKAWTQALLSVVMVGLGYWSLAIAPWFLLPIAWIFTGTALTGFFVIGHDCGHRSFAKRRWVNDLVGHIFMMPLIYPFHSWRIKHNHHHKHTNKLDEDNAWHPIRPEVFASWGKTRQSAFKLFMRQRLWWVGSVGHWAVVHFDWRKFKVKDQADVKLSVAVVVLFAAVAFPTLIATTGIWGFVKFWFVPWLGYHFWMSTFTIVHHTYPDVPFEAENKWHEAMAQLFGTIHCDYPKWVEVLCHDINVHVPHHLSTAIPSYNLRLAYSSIQENWGDYLHDELRFSWSLMKLITDECQLYQTDVGYQPFKDYYAGR.

2 consecutive transmembrane segments (helical) span residues 41-61 (AWTQ…SLAI) and 64-84 (WFLL…FFVI). The Histidine box-1 signature appears at 86-90 (HDCGH). The helical transmembrane segment at 98–118 (WVNDLVGHIFMMPLIYPFHSW) threads the bilayer. The Histidine box-2 signature appears at 122 to 126 (HNHHH). 2 helical membrane passes run 196–216 (VAVV…TTGI) and 219–239 (FVKF…TFTI). Residues 287-291 (HHLST) carry the Histidine box-3 motif.

It belongs to the fatty acid desaturase type 2 family. Fe(2+) is required as a cofactor.

The protein resides in the membrane. It catalyses the reaction a 1-[(9Z)-octadecenoyl]-2-acyl-glycerolipid + 2 reduced [2Fe-2S]-[ferredoxin] + O2 + 2 H(+) = a 1-[(9Z,12Z)-octadecdienoyl]-2-acyl-glycerolipid + 2 oxidized [2Fe-2S]-[ferredoxin] + 2 H2O. Its pathway is lipid metabolism; polyunsaturated fatty acid biosynthesis. Functionally, desaturase involved in fatty acid biosynthesis. Introduces a double bond at carbon 12 of oleoyl groups (18:1) attached to the sn-1 position of the glycerol moiety of membrane glycerolipids. In Anabaena variabilis, this protein is sn-1 oleoyl-lipid 12-desaturase.